The primary structure comprises 270 residues: MSTPFYVSPQQAMADRAEYARKGIARGRSLVVLQYADGIVFVGENPSRALHKFSEIYDRIGFAAAGKYNEYENLRIGGVRYADLRGYTYDRDDVTARGLANVYAQTLGTIFSSAAEKPYEVELVVAEVGSEPEGDQIYRLPHDGSIVDEHGSVAVGGNSEQISTFLDQRHRDGMTLAEALKLAVQALSREPGGGEREIPAERLEVAVLDRTRPQQRKFKRIVGRQLARLLDTEAAGSTPTDAPSDTEDGDSTDGTDRADGTTDSTEETEK.

A disordered region spans residues 229–270; it reads LLDTEAAGSTPTDAPSDTEDGDSTDGTDRADGTTDSTEETEK. Positions 244–253 are enriched in acidic residues; that stretch reads SDTEDGDSTD.

It belongs to the peptidase T1A family. In terms of assembly, the 20S proteasome core is composed of 14 alpha and 14 beta subunits that assemble into four stacked heptameric rings, resulting in a barrel-shaped structure. The two inner rings, each composed of seven catalytic beta subunits, are sandwiched by two outer rings, each composed of seven alpha subunits. The catalytic chamber with the active sites is on the inside of the barrel. Has a gated structure, the ends of the cylinder being occluded by the N-termini of the alpha-subunits. Is capped by the proteasome-associated ATPase, ARC.

It is found in the cytoplasm. The protein operates within protein degradation; proteasomal Pup-dependent pathway. With respect to regulation, the formation of the proteasomal ATPase ARC-20S proteasome complex, likely via the docking of the C-termini of ARC into the intersubunit pockets in the alpha-rings, may trigger opening of the gate for substrate entry. Interconversion between the open-gate and close-gate conformations leads to a dynamic regulation of the 20S proteasome proteolysis activity. Its function is as follows. Component of the proteasome core, a large protease complex with broad specificity involved in protein degradation. This chain is Proteasome subunit alpha, found in Streptomyces griseus subsp. griseus (strain JCM 4626 / CBS 651.72 / NBRC 13350 / KCC S-0626 / ISP 5235).